The sequence spans 440 residues: UPF0761 membrane protein Rru_A2625 (440 aa).

7 consecutive transmembrane segments (helical) span residues 29–49 (ILAT…THDI), 61–81 (LLAL…FPGF), 117–137 (GLTA…LLTI), 157–177 (LLVY…SFSL), 201–221 (PTLG…MLVP), 224–244 (PVPL…SALL), and 264–284 (ALAA…VVLM).

It belongs to the UPF0761 family.

It localises to the cell inner membrane. In Rhodospirillum rubrum (strain ATCC 11170 / ATH 1.1.1 / DSM 467 / LMG 4362 / NCIMB 8255 / S1), this protein is UPF0761 membrane protein Rru_A2625.